We begin with the raw amino-acid sequence, 545 residues long: Membrane protein insertase YidC (545 aa).

Residues 6–26 form a helical membrane-spanning segment; the sequence is NILLIGLLFVSFLLWQQWQAD. Residues 44 to 65 form a disordered region; sequence STVADAHSSDVPDADSAVPEAT. 4 helical membrane passes run 346-366, 424-444, 461-481, and 504-524; these read LLMF…LITL, GGCL…WVLL, LSVQ…MFVM, and VIFT…WLVG.

The protein belongs to the OXA1/ALB3/YidC family. Type 1 subfamily. As to quaternary structure, interacts with the Sec translocase complex via SecD. Specifically interacts with transmembrane segments of nascent integral membrane proteins during membrane integration.

It localises to the cell inner membrane. In terms of biological role, required for the insertion and/or proper folding and/or complex formation of integral membrane proteins into the membrane. Involved in integration of membrane proteins that insert both dependently and independently of the Sec translocase complex, as well as at least some lipoproteins. Aids folding of multispanning membrane proteins. In Shewanella pealeana (strain ATCC 700345 / ANG-SQ1), this protein is Membrane protein insertase YidC.